The chain runs to 174 residues: DNA replication inhibitor plutonium (174 aa).

2 ANK repeats span residues Y39–A68 and F72–L103. T167 is subject to Phosphothreonine.

In terms of biological role, inhibits DNA replication early in developments. May bind and block the action of a replication or initiation factor. The protein is DNA replication inhibitor plutonium (plu) of Drosophila melanogaster (Fruit fly).